Here is a 381-residue protein sequence, read N- to C-terminus: Acetylornithine deacetylase (381 aa).

His78 serves as a coordination point for Zn(2+). Asp80 is a catalytic residue. Residue Asp110 participates in Zn(2+) binding. Glu142 is a catalytic residue. Residues Glu143, Glu167, and His353 each contribute to the Zn(2+) site.

Belongs to the peptidase M20A family. ArgE subfamily. Homodimer. Zn(2+) is required as a cofactor. It depends on Co(2+) as a cofactor. Glutathione serves as cofactor.

The protein resides in the cytoplasm. The catalysed reaction is N(2)-acetyl-L-ornithine + H2O = L-ornithine + acetate. It functions in the pathway amino-acid biosynthesis; L-arginine biosynthesis; L-ornithine from N(2)-acetyl-L-ornithine (linear): step 1/1. Catalyzes the hydrolysis of the amide bond of N(2)-acetylated L-amino acids. Cleaves the acetyl group from N-acetyl-L-ornithine to form L-ornithine, an intermediate in L-arginine biosynthesis pathway, and a branchpoint in the synthesis of polyamines. The protein is Acetylornithine deacetylase of Moritella profunda.